A 594-amino-acid polypeptide reads, in one-letter code: SHC-transforming protein 3 (594 aa).

The segment at 98–147 (GSCSAPSLAAPDGSAPSAPRAPAMSAARKGRPGDEPLPRPPRGAPHASDQ) is disordered. The span at 101-124 (SAPSLAAPDGSAPSAPRAPAMSAA) shows a compositional bias: low complexity. The region spanning 149-334 (LGPGVTYVVK…LDEPWTEEEG (186 aa)) is the PID domain. The segment at 335–498 (DGSDHPYYNS…KMLEELQAET (164 aa)) is CH1. Disordered regions lie at residues 351 to 373 (PPGG…AQFA) and 386 to 405 (GDTF…SSDI). Positions 393-405 (WQQTPLRQGSSDI) are enriched in polar residues. Ser402 is subject to Phosphoserine. The 92-residue stretch at 499 to 590 (WYQGEMSRKE…GSELCLQQPV (92 aa)) folds into the SH2 domain.

In terms of assembly, interacts with the Trk receptors in a phosphotyrosine-dependent manner. Once activated, binds to GRB2. Interacts with activated EGF receptors. Post-translationally, tyrosine phosphorylated. Mainly expressed in brain. Hardly detectable in other tissues, except in pancreas. Highly expressed in the cerebral cortex, frontal and temporal lobes, occipital pole, hippocampus, caudate nucleus and amygdala. Expressed at low level in the cerebellum, medulla and spinal cord.

Its function is as follows. Signaling adapter that couples activated growth factor receptors to signaling pathway in neurons. Involved in the signal transduction pathways of neurotrophin-activated Trk receptors in cortical neurons. This chain is SHC-transforming protein 3 (SHC3), found in Homo sapiens (Human).